The primary structure comprises 131 residues: Small ribosomal subunit protein uS8 (131 aa).

The protein belongs to the universal ribosomal protein uS8 family. As to quaternary structure, part of the 30S ribosomal subunit. Contacts proteins S5 and S12.

In terms of biological role, one of the primary rRNA binding proteins, it binds directly to 16S rRNA central domain where it helps coordinate assembly of the platform of the 30S subunit. This chain is Small ribosomal subunit protein uS8, found in Chlorobium limicola (strain DSM 245 / NBRC 103803 / 6330).